A 275-amino-acid polypeptide reads, in one-letter code: uncharacterized protein (275 aa).

Residues 20–22 (RAQ), 41–42 (DI), 80–81 (DI), and asparagine 107 each bind NAD(+). Serine 160 is a binding site for substrate. Catalysis depends on tyrosine 173, which acts as the Proton acceptor. NAD(+) is bound by residues lysine 177 and 206–208 (VDT).

It belongs to the short-chain dehydrogenases/reductases (SDR) family.

This is an uncharacterized protein from Mycobacterium tuberculosis (strain CDC 1551 / Oshkosh).